The chain runs to 251 residues: CDP-diacylglycerol pyrophosphatase (251 aa).

Residues 4–24 (AGLLFLVMIVIAVVATGIGYW) traverse the membrane as a helical segment.

The protein belongs to the Cdh family.

The protein localises to the cell inner membrane. The enzyme catalyses a CDP-1,2-diacyl-sn-glycerol + H2O = a 1,2-diacyl-sn-glycero-3-phosphate + CMP + 2 H(+). Its pathway is phospholipid metabolism; CDP-diacylglycerol degradation; phosphatidate from CDP-diacylglycerol: step 1/1. The protein is CDP-diacylglycerol pyrophosphatase of Escherichia coli O45:K1 (strain S88 / ExPEC).